Reading from the N-terminus, the 253-residue chain is Low affinity immunoglobulin gamma Fc region receptor III-A (253 aa).

The N-terminal stretch at 1-20 is a signal peptide; the sequence is MGQPLPPVALLLLVSASSRA. Topologically, residues 21–207 are extracellular; it reads ADVPKALVLL…ISSSVLPWHQ (187 aa). Ig-like C2-type domains are found at residues 24-90 and 99-189; these read PKAL…YRCQ and PVQL…VTIT. 2 cysteine pairs are disulfide-bonded: Cys-47–Cys-89 and Cys-128–Cys-172. Residues Asn-56, Asn-63, Asn-165, and Asn-180 are each glycosylated (N-linked (GlcNAc...) asparagine). Residues 208–226 form a helical membrane-spanning segment; it reads IAFCLVMGLLLAADTGLYF. The Cytoplasmic segment spans residues 227–253; that stretch reads SVQRDLRSSQRARKEHTLGWSLGSQDK.

In terms of assembly, forms a heterooligomeric complex with ITAM-containing signaling subunits FCER1G. Interacts (via transmembrane domain) with signaling subunits; this interaction is a prerequisite for receptor complex expression on the cell surface and intracellular signal transduction. Binds the Fc region of antigen-complexed IgG.

It is found in the cell membrane. In terms of biological role, receptor for the invariable Fc fragment of immunoglobulin gamma (IgG). Optimally activated upon binding of clustered antigen-IgG complexes displayed on cell surfaces, triggers lysis of antibody-coated cells, a process known as antibody-dependent cellular cytotoxicity (ADCC). Does not bind free monomeric IgG, thus avoiding inappropriate effector cell activation in the absence of antigenic trigger. Mediates IgG effector functions on natural killer (NK) cells. Binds antigen-IgG complexes generated upon infection and triggers NK cell-dependent cytokine production and degranulation to limit viral load and propagation. Fc-binding subunit that associates with FCER1G adapter to form functional signaling complexes. Following the engagement of antigen-IgG complexes, triggers phosphorylation of immunoreceptor tyrosine-based activation motif (ITAM)-containing adapters with subsequent activation of phosphatidylinositol 3-kinase signaling and sustained elevation of intracellular calcium that ultimately drive NK cell activation. Mediates enhanced ADCC in response to afucosylated IgGs. This chain is Low affinity immunoglobulin gamma Fc region receptor III-A, found in Oryctolagus cuniculus (Rabbit).